We begin with the raw amino-acid sequence, 106 residues long: Thioredoxin-2 (106 aa).

Residues 2–106 (VYQIKDKADL…RLEDVIKANI (105 aa)) enclose the Thioredoxin domain. Catalysis depends on nucleophile residues cysteine 32 and cysteine 35. An intrachain disulfide couples cysteine 32 to cysteine 35.

The protein belongs to the thioredoxin family.

Functionally, participates in various redox reactions through the reversible oxidation of its active center dithiol to a disulfide and catalyzes dithiol-disulfide exchange reactions. As a reducing substrate of peroxiredoxin 1, thioredoxin 2 is preferred over thioredoxin 1. This chain is Thioredoxin-2, found in Drosophila yakuba (Fruit fly).